A 222-amino-acid chain; its full sequence is Adenylate kinase (222 aa).

Gly-10 to Thr-15 serves as a coordination point for ATP. An NMP region spans residues Ser-30 to Val-59. Residues Thr-31, Arg-36, Gly-57–Val-59, Gly-85–Arg-88, and Gln-92 contribute to the AMP site. Positions Gly-122–Asp-159 are LID. Residues Arg-123 and Thr-132 to Tyr-133 contribute to the ATP site. The segment at Asn-138–Lys-160 is disordered. Residues Arg-156 and Arg-167 each contribute to the AMP site. Gly-207 is an ATP binding site.

The protein belongs to the adenylate kinase family. Monomer.

The protein resides in the cytoplasm. It catalyses the reaction AMP + ATP = 2 ADP. The protein operates within purine metabolism; AMP biosynthesis via salvage pathway; AMP from ADP: step 1/1. Catalyzes the reversible transfer of the terminal phosphate group between ATP and AMP. Plays an important role in cellular energy homeostasis and in adenine nucleotide metabolism. This chain is Adenylate kinase, found in Ralstonia pickettii (strain 12J).